The chain runs to 345 residues: MGSSEDQAYRLLNDYANGFMVSQVLFAACELGVFDLLAEAPGPLDVAAVAAGVRASAHGTELLLDICVSLKLLKVETRGGKAFYRNTELSSDYLTTVSPTSQCSMLKYMGRTSYRCWGHLADAVREGRNQYLETFGVPAEELFTAIYRSEGERLQFMQALQEVWSVNGRSVLTAFDLSVFPLMCDLGGGAGALAKECMSLYPGCKITVFDIPEVVWTAKQHFSFQEEEQIDFQEGDFFKDPLPEADLYILARVLHDWADGKCSHLLERIYHTCKPGGGILVIESLLDEDRRGPLLTQLYSLNMLVQTEGQERTPTHYHMLLSSAGFRDFQFKKTGAIYDAILARK.

Residues Tyr147, Trp164, Asp210, 235 to 237, and Arg252 each bind S-adenosyl-L-methionine; that span reads GDF. His255 functions as the Proton donor/acceptor in the catalytic mechanism. Substrate contacts are provided by Asp256, Asn302, and Gln306.

Belongs to the class I-like SAM-binding methyltransferase superfamily. Cation-independent O-methyltransferase family. Homodimer. In terms of tissue distribution, expressed in the pineal gland (at protein level). In the retina, very low expression is found at the mRNA level, and not at the protein level.

The catalysed reaction is N-acetylserotonin + S-adenosyl-L-methionine = melatonin + S-adenosyl-L-homocysteine + H(+). It functions in the pathway aromatic compound metabolism; melatonin biosynthesis; melatonin from serotonin: step 1/2. In terms of biological role, catalyzes the transfer of a methyl group onto N-acetylserotonin, producing melatonin (N-acetyl-5-methoxytryptamine). Does not show Acetylserotonin O-methyltransferase activity. The chain is Acetylserotonin O-methyltransferase (ASMT) from Homo sapiens (Human).